The following is a 455-amino-acid chain: Asparagine--tRNA ligase (455 aa).

Belongs to the class-II aminoacyl-tRNA synthetase family. As to quaternary structure, homodimer.

The protein resides in the cytoplasm. The enzyme catalyses tRNA(Asn) + L-asparagine + ATP = L-asparaginyl-tRNA(Asn) + AMP + diphosphate + H(+). The sequence is that of Asparagine--tRNA ligase from Mycoplasma pneumoniae (strain ATCC 29342 / M129 / Subtype 1) (Mycoplasmoides pneumoniae).